The following is a 400-amino-acid chain: Carbamoyl phosphate synthase small chain (400 aa).

A CPSase region spans residues 1–199 (MSNETNANST…PYVIEAEGEA (199 aa)). L-glutamine is bound by residues Ser66, Gly250, and Gly252. The Glutamine amidotransferase type-1 domain occupies 200–395 (RHTVVAYDLG…VALMDEDSEN (196 aa)). Cys278 acts as the Nucleophile in catalysis. Phe279, Gln282, Asn320, Gly322, and Phe323 together coordinate L-glutamine. Residues His368 and Glu370 contribute to the active site.

The protein belongs to the CarA family. Composed of two chains; the small (or glutamine) chain promotes the hydrolysis of glutamine to ammonia, which is used by the large (or ammonia) chain to synthesize carbamoyl phosphate. Tetramer of heterodimers (alpha,beta)4.

It catalyses the reaction hydrogencarbonate + L-glutamine + 2 ATP + H2O = carbamoyl phosphate + L-glutamate + 2 ADP + phosphate + 2 H(+). The catalysed reaction is L-glutamine + H2O = L-glutamate + NH4(+). The protein operates within amino-acid biosynthesis; L-arginine biosynthesis; carbamoyl phosphate from bicarbonate: step 1/1. Its pathway is pyrimidine metabolism; UMP biosynthesis via de novo pathway; (S)-dihydroorotate from bicarbonate: step 1/3. Small subunit of the glutamine-dependent carbamoyl phosphate synthetase (CPSase). CPSase catalyzes the formation of carbamoyl phosphate from the ammonia moiety of glutamine, carbonate, and phosphate donated by ATP, constituting the first step of 2 biosynthetic pathways, one leading to arginine and/or urea and the other to pyrimidine nucleotides. The small subunit (glutamine amidotransferase) binds and cleaves glutamine to supply the large subunit with the substrate ammonia. In Corynebacterium efficiens (strain DSM 44549 / YS-314 / AJ 12310 / JCM 11189 / NBRC 100395), this protein is Carbamoyl phosphate synthase small chain.